Reading from the N-terminus, the 493-residue chain is MYNFLVKKSKCTETDALLIPYFEEKTNIPNEEINNKINILKKKEQFKGSYGEIFNITRTTDDNIQDIILLGLGKETEITKEKIRRAFGKAVNEIKRLKSKSVFLRFDSVEAIGLENTLKAMVEGLALGSYSFNKYKSDKKEEVEVTVHIGGHNINEEEVELCEKAIDEAMLLSETTCLARDLVNEPANNMYPETLAKEVKNIGSKYGFEVEVFDENQIEELKMESFLSVGKGSDNLPRLIVMRYFGDKDNMDQRLALVGKGLTYDSGGYSLKTNAGMVTMKADMGGAASVIGAISAIAKRNLKINVIAVVAACENLISGHAYKPGDIIGSMEGKTIEILNTDAEGRLTLIDAVTYAIEKEKASEIIDVATLTGAAVVSLGEDVTAVITNKDEFYGELREASYETGEKVWQMPSFEDYGKLIKSNIADLKNIGGKYAGTITAGLFIGEFIQNKPWLHLDIAGPAFSEKKGDYCPTGGTGAGVRTLYELANRRCK.

Mn(2+) contacts are provided by K260 and D265. K272 is a catalytic residue. Mn(2+) is bound by residues D283, D342, and E344. The active site involves R346.

It belongs to the peptidase M17 family. It depends on Mn(2+) as a cofactor.

It is found in the cytoplasm. It carries out the reaction Release of an N-terminal amino acid, Xaa-|-Yaa-, in which Xaa is preferably Leu, but may be other amino acids including Pro although not Arg or Lys, and Yaa may be Pro. Amino acid amides and methyl esters are also readily hydrolyzed, but rates on arylamides are exceedingly low.. It catalyses the reaction Release of an N-terminal amino acid, preferentially leucine, but not glutamic or aspartic acids.. Functionally, presumably involved in the processing and regular turnover of intracellular proteins. Catalyzes the removal of unsubstituted N-terminal amino acids from various peptides. This Clostridium perfringens (strain 13 / Type A) protein is Probable cytosol aminopeptidase.